A 178-amino-acid polypeptide reads, in one-letter code: Inorganic pyrophosphatase (178 aa).

Positions 30, 44, and 56 each coordinate substrate. Mg(2+) contacts are provided by aspartate 66, aspartate 71, and aspartate 103. Residue tyrosine 140 coordinates substrate.

It belongs to the PPase family. Homohexamer. Requires Mg(2+) as cofactor.

The protein localises to the cytoplasm. It carries out the reaction diphosphate + H2O = 2 phosphate + H(+). Functionally, catalyzes the hydrolysis of inorganic pyrophosphate (PPi) forming two phosphate ions. The polypeptide is Inorganic pyrophosphatase (Pyrococcus furiosus (strain ATCC 43587 / DSM 3638 / JCM 8422 / Vc1)).